The sequence spans 143 residues: Transcriptional regulator MraZ (143 aa).

SpoVT-AbrB domains are found at residues 5 to 47 (TFTP…PREE) and 76 to 119 (ADEQ…DAQA).

It belongs to the MraZ family. In terms of assembly, forms oligomers.

The protein localises to the cytoplasm. It is found in the nucleoid. In Corynebacterium urealyticum (strain ATCC 43042 / DSM 7109), this protein is Transcriptional regulator MraZ.